Here is a 312-residue protein sequence, read N- to C-terminus: Terpene synthase 8 (312 aa).

Residues 96–101 (DDYIYE) carry the DDxx(x)D/E motif motif. Positions 224-232 (NDCGSFKME) match the NDxxSxxxD/E motif motif.

Belongs to the terpene synthase family.

The enzyme catalyses (2E,6E)-farnesyl diphosphate + H2O = discoidol + diphosphate. Its pathway is sesquiterpene biosynthesis. In terms of biological role, terpene synthase; part of the gene cluster that mediates the biosynthesis of the trisnorsesquiterpene discodiene which has a function during later stages of multicellular development, during the transition from fingers to Mexican hats. The terpene synthase tps8 converts its substrate farnesyl diphosphate (FDP) into the bicyclic sesquiterpene alcohol discoidol. The cytochrome P450 monooxygenase cyp521A1 then catalyzes the oxidative degradation of discoidol to form the trisnorsesquiterpene discodiene. The sequence is that of Terpene synthase 8 from Dictyostelium discoideum (Social amoeba).